The sequence spans 409 residues: Argininosuccinate synthase (409 aa).

Residues 16–24 and alanine 44 each bind ATP; that span reads AYSGGLDTS. L-citrulline contacts are provided by tyrosine 96 and serine 101. Glycine 126 is an ATP binding site. The L-aspartate site is built by threonine 128, asparagine 132, and aspartate 133. Asparagine 132 serves as a coordination point for L-citrulline. L-citrulline is bound by residues arginine 136, serine 185, serine 194, glutamate 270, and tyrosine 282.

Belongs to the argininosuccinate synthase family. Type 1 subfamily. In terms of assembly, homotetramer.

The protein resides in the cytoplasm. The catalysed reaction is L-citrulline + L-aspartate + ATP = 2-(N(omega)-L-arginino)succinate + AMP + diphosphate + H(+). Its pathway is amino-acid biosynthesis; L-arginine biosynthesis; L-arginine from L-ornithine and carbamoyl phosphate: step 2/3. In Shewanella piezotolerans (strain WP3 / JCM 13877), this protein is Argininosuccinate synthase.